Reading from the N-terminus, the 504-residue chain is MRGLRRGLSRLGPRLGPWAVPRSLRRVLRAAGPWRGQSSAGSVSERGGASMEEVLSRSVPLLPPYETKEKAPPPAERRSAEFVRYYRGLEAGSRRAELLGCLARDFGADHGRVAEFSAKVLQAREQEREQGALLQAEDRVRYYLTPRYRALFQHLGRLEGGLRFLVELRGDLVEGLAAKAVDGPHVKEMSGVLKNMLSEWFSTGFLNLERVTWQSPCEVLQKISDSEAVHPVRNWVDLKRRVGPYRRCYFFSHCAIPGEPLIILHVALTSDISSSIQSIVKDVESLETEDAEKITTAIFYSISLAQQGLQGVELGNHLIKRVVKELQKDLPQIEAFSSLSPIPGFTKWLVGLLSSQTKELGRNELFTESERQEISEITEDSTTETLKKLLTNSEWVKSEKLVKALHSPLMRLCAWYLYGEKHRGYALNPVANFHLQNGAELWRINWMGDTSPRGIAASCGMMVNYRYFLEDTASNSAAYLGTKHIKASEQVLSFVSQFQQNSKL.

Residues 1-50 (MRGLRRGLSRLGPRLGPWAVPRSLRRVLRAAGPWRGQSSAGSVSERGGAS) constitute a mitochondrion transit peptide. Residues 51 to 201 (MEEVLSRSVP…VLKNMLSEWF (151 aa)) form an alpha-helical domain region. The tract at residues 202–504 (STGFLNLERV…VSQFQQNSKL (303 aa)) is catalytic domain. Ser340 (proton acceptor) is an active-site residue. Catalysis depends on His434, which acts as the Proton donor. The Microbody targeting signal motif lies at 502–504 (SKL).

The protein resides in the mitochondrion. The protein localises to the cytoplasm. It localises to the peroxisome. The catalysed reaction is malonyl-CoA + H(+) = acetyl-CoA + CO2. The protein operates within metabolic intermediate biosynthesis; acetyl-CoA biosynthesis; acetyl-CoA from malonyl-CoA: step 1/1. Its function is as follows. Catalyzes the conversion of malonyl-CoA to acetyl-CoA. In the fatty acid biosynthesis MCD selectively removes malonyl-CoA and thus assures that methyl-malonyl-CoA is the only chain elongating substrate for fatty acid synthase and that fatty acids with multiple methyl side chains are produced. The protein is Malonyl-CoA decarboxylase, mitochondrial (MLYCD) of Anser anser anser (Western greylag goose).